Reading from the N-terminus, the 123-residue chain is Large ribosomal subunit protein uL18 (123 aa).

This sequence belongs to the universal ribosomal protein uL18 family. In terms of assembly, part of the 50S ribosomal subunit; part of the 5S rRNA/L5/L18/L25 subcomplex. Contacts the 5S and 23S rRNAs.

Its function is as follows. This is one of the proteins that bind and probably mediate the attachment of the 5S RNA into the large ribosomal subunit, where it forms part of the central protuberance. In Desulforudis audaxviator (strain MP104C), this protein is Large ribosomal subunit protein uL18.